A 120-amino-acid chain; its full sequence is NAD(P)H-quinone oxidoreductase subunit 3 (120 aa).

The next 3 helical transmembrane spans lie at Leu11–Ile31, Met64–Val84, and Leu89–Val109.

The protein belongs to the complex I subunit 3 family. In terms of assembly, NDH-1 can be composed of about 15 different subunits; different subcomplexes with different compositions have been identified which probably have different functions.

The protein resides in the cell inner membrane. The enzyme catalyses a plastoquinone + NADH + (n+1) H(+)(in) = a plastoquinol + NAD(+) + n H(+)(out). It carries out the reaction a plastoquinone + NADPH + (n+1) H(+)(in) = a plastoquinol + NADP(+) + n H(+)(out). NDH-1 shuttles electrons from an unknown electron donor, via FMN and iron-sulfur (Fe-S) centers, to quinones in the respiratory and/or the photosynthetic chain. The immediate electron acceptor for the enzyme in this species is believed to be plastoquinone. Couples the redox reaction to proton translocation, and thus conserves the redox energy in a proton gradient. Cyanobacterial NDH-1 also plays a role in inorganic carbon-concentration. In Gloeobacter violaceus (strain ATCC 29082 / PCC 7421), this protein is NAD(P)H-quinone oxidoreductase subunit 3.